A 121-amino-acid polypeptide reads, in one-letter code: UPF0102 protein Mvan_2202 (121 aa).

The protein belongs to the UPF0102 family.

This chain is UPF0102 protein Mvan_2202, found in Mycolicibacterium vanbaalenii (strain DSM 7251 / JCM 13017 / BCRC 16820 / KCTC 9966 / NRRL B-24157 / PYR-1) (Mycobacterium vanbaalenii).